We begin with the raw amino-acid sequence, 450 residues long: Tubulin alpha chain (450 aa).

Residues 1–4 carry the MREC motif motif; the sequence is MREC. Residue Gln-11 participates in GTP binding. N6-acetyllysine is present on Lys-40. GTP-binding residues include Glu-71, Ser-140, Gly-144, Thr-145, Thr-179, Asn-206, and Asn-228. Glu-71 serves as a coordination point for Mg(2+). Residue Glu-254 is part of the active site. Glu-444 is subject to 5-glutamyl polyglutamate.

Belongs to the tubulin family. As to quaternary structure, dimer of alpha and beta chains. A typical microtubule is a hollow water-filled tube with an outer diameter of 25 nm and an inner diameter of 15 nM. Alpha-beta heterodimers associate head-to-tail to form protofilaments running lengthwise along the microtubule wall with the beta-tubulin subunit facing the microtubule plus end conferring a structural polarity. Microtubules usually have 13 protofilaments but different protofilament numbers can be found in some organisms and specialized cells. It depends on Mg(2+) as a cofactor. Some glutamate residues at the C-terminus are polyglycylated, resulting in polyglycine chains on the gamma-carboxyl group. Glycylation is mainly limited to tubulin incorporated into axonemes (cilia and flagella) whereas glutamylation is prevalent in neuronal cells, centrioles, axonemes, and the mitotic spindle. Both modifications can coexist on the same protein on adjacent residues, and lowering polyglycylation levels increases polyglutamylation, and reciprocally. The precise function of polyglycylation is still unclear. Post-translationally, some glutamate residues at the C-terminus are polyglutamylated, resulting in polyglutamate chains on the gamma-carboxyl group. Polyglutamylation plays a key role in microtubule severing by spastin (SPAST). SPAST preferentially recognizes and acts on microtubules decorated with short polyglutamate tails: severing activity by SPAST increases as the number of glutamates per tubulin rises from one to eight, but decreases beyond this glutamylation threshold. In terms of processing, acetylation of alpha chains at Lys-40 is located inside the microtubule lumen. This modification has been correlated with increased microtubule stability, intracellular transport and ciliary assembly. Undergoes a tyrosination/detyrosination cycle, the cyclic removal and re-addition of a C-terminal tyrosine residue by the enzymes tubulin tyrosine carboxypeptidase (MATCAP, VASH1 or VASH2) and tubulin tyrosine ligase (TTL), respectively. Post-translationally, tyrosination promotes microtubule interaction with CAP-Gly microtubule plus-end tracking proteins. Tyrosinated tubulins regulate the initiation of dynein-driven motility. In terms of processing, detyrosination is involved in metaphase plate congression by guiding chromosomes during mitosis. Detyrosination increases microtubules-dependent mechanotransduction in dystrophic cardiac and skeletal muscle. In cardiomyocytes, detyrosinated microtubules are required to resist to contractile compression during contraction.

The protein resides in the cytoplasm. Its subcellular location is the cytoskeleton. The catalysed reaction is GTP + H2O = GDP + phosphate + H(+). Functionally, tubulin is the major constituent of microtubules, a cylinder consisting of laterally associated linear protofilaments composed of alpha- and beta-tubulin heterodimers. Microtubules grow by the addition of GTP-tubulin dimers to the microtubule end, where a stabilizing cap forms. Below the cap, tubulin dimers are in GDP-bound state, owing to GTPase activity of alpha-tubulin. In Notophthalmus viridescens (Eastern newt), this protein is Tubulin alpha chain.